We begin with the raw amino-acid sequence, 171 residues long: Co-chaperone protein HscB (171 aa).

The region spanning Asp-2–Leu-74 is the J domain.

Belongs to the HscB family. Interacts with HscA and stimulates its ATPase activity. Interacts with IscU.

In terms of biological role, co-chaperone involved in the maturation of iron-sulfur cluster-containing proteins. Seems to help targeting proteins to be folded toward HscA. In Escherichia coli (strain SE11), this protein is Co-chaperone protein HscB.